We begin with the raw amino-acid sequence, 341 residues long: Anthranilate phosphoribosyltransferase (341 aa).

5-phospho-alpha-D-ribose 1-diphosphate-binding positions include Gly79, Gly82–Asp83, Thr87, Asn89–Thr92, Lys107–Ser115, and Ser119. An anthranilate-binding site is contributed by Gly79. Ser91 contacts Mg(2+). Asn110 is a binding site for anthranilate. Arg165 is an anthranilate binding site. Asp224 and Glu225 together coordinate Mg(2+).

This sequence belongs to the anthranilate phosphoribosyltransferase family. Homodimer. Requires Mg(2+) as cofactor.

The enzyme catalyses N-(5-phospho-beta-D-ribosyl)anthranilate + diphosphate = 5-phospho-alpha-D-ribose 1-diphosphate + anthranilate. It functions in the pathway amino-acid biosynthesis; L-tryptophan biosynthesis; L-tryptophan from chorismate: step 2/5. In terms of biological role, catalyzes the transfer of the phosphoribosyl group of 5-phosphorylribose-1-pyrophosphate (PRPP) to anthranilate to yield N-(5'-phosphoribosyl)-anthranilate (PRA). The chain is Anthranilate phosphoribosyltransferase from Symbiobacterium thermophilum (strain DSM 24528 / JCM 14929 / IAM 14863 / T).